A 67-amino-acid chain; its full sequence is Coiled-coil domain-containing protein 179 (67 aa).

Disordered regions lie at residues 1 to 32 and 47 to 67; these read MCLR…RQSV and RKLG…ILWT. Residues 27-53 are a coiled coil; it reads STRQSVEKRINYMQNLQKEKRKLGKRF.

The chain is Coiled-coil domain-containing protein 179 (Ccdc179) from Mus musculus (Mouse).